The following is a 355-amino-acid chain: Methylthioribose-1-phosphate isomerase (355 aa).

Residues 53–55 (RGA), R96, and Q205 contribute to the substrate site. The active-site Proton donor is the D246. 256–257 (NK) is a substrate binding site.

This sequence belongs to the eIF-2B alpha/beta/delta subunits family. MtnA subfamily.

It carries out the reaction 5-(methylsulfanyl)-alpha-D-ribose 1-phosphate = 5-(methylsulfanyl)-D-ribulose 1-phosphate. The protein operates within amino-acid biosynthesis; L-methionine biosynthesis via salvage pathway; L-methionine from S-methyl-5-thio-alpha-D-ribose 1-phosphate: step 1/6. Its function is as follows. Catalyzes the interconversion of methylthioribose-1-phosphate (MTR-1-P) into methylthioribulose-1-phosphate (MTRu-1-P). This chain is Methylthioribose-1-phosphate isomerase, found in Thermosynechococcus vestitus (strain NIES-2133 / IAM M-273 / BP-1).